A 45-amino-acid polypeptide reads, in one-letter code: Large ribosomal subunit protein bL34 (45 aa).

The protein belongs to the bacterial ribosomal protein bL34 family.

This Acidothermus cellulolyticus (strain ATCC 43068 / DSM 8971 / 11B) protein is Large ribosomal subunit protein bL34.